The chain runs to 476 residues: Glycogen synthase (476 aa).

Lys15 lines the ADP-alpha-D-glucose pocket.

It belongs to the glycosyltransferase 1 family. Bacterial/plant glycogen synthase subfamily.

The catalysed reaction is [(1-&gt;4)-alpha-D-glucosyl](n) + ADP-alpha-D-glucose = [(1-&gt;4)-alpha-D-glucosyl](n+1) + ADP + H(+). It functions in the pathway glycan biosynthesis; glycogen biosynthesis. Synthesizes alpha-1,4-glucan chains using ADP-glucose. This Streptococcus mutans serotype c (strain ATCC 700610 / UA159) protein is Glycogen synthase.